The primary structure comprises 388 residues: tRNA (guanine(26)-N(2))-dimethyltransferase (388 aa).

The 375-residue stretch at 7-381 (KTVEEGLTKI…APLKKIKEII (375 aa)) folds into the Trm1 methyltransferase domain. 5 residues coordinate S-adenosyl-L-methionine: Arg40, Arg70, Asp88, Asp115, and Ala116. Residues Cys248, Cys251, Cys268, and Cys271 each contribute to the Zn(2+) site.

The protein belongs to the class I-like SAM-binding methyltransferase superfamily. Trm1 family.

It carries out the reaction guanosine(26) in tRNA + 2 S-adenosyl-L-methionine = N(2)-dimethylguanosine(26) in tRNA + 2 S-adenosyl-L-homocysteine + 2 H(+). Functionally, dimethylates a single guanine residue at position 26 of a number of tRNAs using S-adenosyl-L-methionine as donor of the methyl groups. This is tRNA (guanine(26)-N(2))-dimethyltransferase from Methanobrevibacter smithii (strain ATCC 35061 / DSM 861 / OCM 144 / PS).